Consider the following 212-residue polypeptide: Interleukin-6 (212 aa).

A signal peptide spans M1–P29. C72 and C78 form a disulfide bridge. The N-linked (GlcNAc...) asparagine glycan is linked to N73. Phosphoserine is present on S81. Residues C101 and C111 are joined by a disulfide bond. N-linked (GlcNAc...) asparagine glycans are attached at residues N160 and N172.

It belongs to the IL-6 superfamily. In terms of assembly, component of a hexamer of two molecules each of IL6, IL6R and IL6ST; first binds to IL6R to associate with the signaling subunit IL6ST. Interacts with IL6R (via the N-terminal ectodomain); this interaction may be affected by IL6R-binding with SORL1, hence decreasing IL6 cis signaling. Interacts with SORL1 (via the N-terminal ectodomain); this interaction leads to IL6 internalization and lysosomal degradation. May form a trimeric complex with the soluble SORL1 ectodomain and soluble IL6R receptor; this interaction might stabilize circulating IL6, hence promoting IL6 trans signaling.

Its subcellular location is the secreted. Its function is as follows. Cytokine with a wide variety of biological functions in immunity, tissue regeneration, and metabolism. Binds to IL6R, then the complex associates to the signaling subunit IL6ST/gp130 to trigger the intracellular IL6-signaling pathway. The interaction with the membrane-bound IL6R and IL6ST stimulates 'classic signaling', whereas the binding of IL6 and soluble IL6R to IL6ST stimulates 'trans-signaling'. Alternatively, 'cluster signaling' occurs when membrane-bound IL6:IL6R complexes on transmitter cells activate IL6ST receptors on neighboring receiver cells. IL6 is a potent inducer of the acute phase response. Rapid production of IL6 contributes to host defense during infection and tissue injury, but excessive IL6 synthesis is involved in disease pathology. In the innate immune response, is synthesized by myeloid cells, such as macrophages and dendritic cells, upon recognition of pathogens through toll-like receptors (TLRs) at the site of infection or tissue injury. In the adaptive immune response, is required for the differentiation of B cells into immunoglobulin-secreting cells. Plays a major role in the differentiation of CD4(+) T cell subsets. Essential factor for the development of T follicular helper (Tfh) cells that are required for the induction of germinal-center formation. Required to drive naive CD4(+) T cells to the Th17 lineage. Also required for proliferation of myeloma cells and the survival of plasmablast cells. Functionally, acts as an essential factor in bone homeostasis and on vessels directly or indirectly by induction of VEGF, resulting in increased angiogenesis activity and vascular permeability. Induces, through 'trans-signaling' and synergistically with IL1B and TNF, the production of VEGF. Involved in metabolic controls, is discharged into the bloodstream after muscle contraction increasing lipolysis and improving insulin resistance. 'Trans-signaling' in central nervous system also regulates energy and glucose homeostasis. Mediates, through GLP-1, crosstalk between insulin-sensitive tissues, intestinal L cells and pancreatic islets to adapt to changes in insulin demand. Also acts as a myokine. Plays a protective role during liver injury, being required for maintenance of tissue regeneration. Also has a pivotal role in iron metabolism by regulating HAMP/hepcidin expression upon inflammation or bacterial infection. Through activation of IL6ST-YAP-NOTCH pathway, induces inflammation-induced epithelial regeneration. In Saimiri sciureus (Common squirrel monkey), this protein is Interleukin-6 (IL6).